The chain runs to 319 residues: Capsid protein (319 aa).

Its subcellular location is the virion. Functionally, the capsid protein self-assembles to form an icosahedral capsid with a T=2 symmetry made of 120 subunits. The polypeptide is Capsid protein (Cryptosporidium parvum virus 1 (strain KSU-1)).